The following is a 216-amino-acid chain: uncharacterized protein (216 aa).

The N-acetyltransferase domain maps to 1–216; that stretch reads MVVKIVEAYE…DVTFLKLKLK (216 aa).

The protein belongs to the acetyltransferase family.

This is an uncharacterized protein from Dictyostelium discoideum (Social amoeba).